The following is a 308-amino-acid chain: Elongation factor Ts (308 aa).

Residues 80 to 83 (TDFV) are involved in Mg(2+) ion dislocation from EF-Tu.

Belongs to the EF-Ts family.

It is found in the cytoplasm. Functionally, associates with the EF-Tu.GDP complex and induces the exchange of GDP to GTP. It remains bound to the aminoacyl-tRNA.EF-Tu.GTP complex up to the GTP hydrolysis stage on the ribosome. In Allorhizobium ampelinum (strain ATCC BAA-846 / DSM 112012 / S4) (Agrobacterium vitis (strain S4)), this protein is Elongation factor Ts.